Here is a 68-residue protein sequence, read N- to C-terminus: Large ribosomal subunit protein bL33c (68 aa).

Belongs to the bacterial ribosomal protein bL33 family.

Its subcellular location is the plastid. The protein resides in the chloroplast. The chain is Large ribosomal subunit protein bL33c from Lactuca sativa (Garden lettuce).